The sequence spans 178 residues: ATP-dependent protease subunit HslV (178 aa).

The active site involves Thr-7. The Na(+) site is built by Gly-162, Cys-165, and Thr-168.

It belongs to the peptidase T1B family. HslV subfamily. As to quaternary structure, a double ring-shaped homohexamer of HslV is capped on each side by a ring-shaped HslU homohexamer. The assembly of the HslU/HslV complex is dependent on binding of ATP.

It localises to the cytoplasm. The enzyme catalyses ATP-dependent cleavage of peptide bonds with broad specificity.. Allosterically activated by HslU binding. Protease subunit of a proteasome-like degradation complex believed to be a general protein degrading machinery. The polypeptide is ATP-dependent protease subunit HslV (Burkholderia cenocepacia (strain ATCC BAA-245 / DSM 16553 / LMG 16656 / NCTC 13227 / J2315 / CF5610) (Burkholderia cepacia (strain J2315))).